A 136-amino-acid polypeptide reads, in one-letter code: Small ribosomal subunit protein uS9 (136 aa).

Belongs to the universal ribosomal protein uS9 family.

The sequence is that of Small ribosomal subunit protein uS9 from Borreliella afzelii (strain PKo) (Borrelia afzelii).